The primary structure comprises 443 residues: 23S rRNA (uracil(1939)-C(5))-methyltransferase RlmD (443 aa).

The TRAM domain maps to 4–66 (QNRFDRTSFQ…RHFDEARVVE (63 aa)). The [4Fe-4S] cluster site is built by Cys79, Cys85, Cys88, and Cys167. Positions 275, 304, 309, 325, 352, and 373 each coordinate S-adenosyl-L-methionine. The active-site Nucleophile is the Cys399.

The protein belongs to the class I-like SAM-binding methyltransferase superfamily. RNA M5U methyltransferase family. RlmD subfamily.

The enzyme catalyses uridine(1939) in 23S rRNA + S-adenosyl-L-methionine = 5-methyluridine(1939) in 23S rRNA + S-adenosyl-L-homocysteine + H(+). Its function is as follows. Catalyzes the formation of 5-methyl-uridine at position 1939 (m5U1939) in 23S rRNA. The chain is 23S rRNA (uracil(1939)-C(5))-methyltransferase RlmD from Xylella fastidiosa (strain Temecula1 / ATCC 700964).